The sequence spans 513 residues: Putative zinc finger CCCH domain-containing protein 51 (513 aa).

A disordered region spans residues 155 to 180 (SMPRNSPNAGRNLVGHPHSSSKSSSK). A compositionally biased stretch (low complexity) spans 170 to 180 (HPHSSSKSSSK). The C3H1-type zinc-finger motif lies at 176 to 204 (KSSSKPCHFHFFRGYCKKGVNCQFFHGSV). An HTH OST-type domain is found at 218–299 (SLSKLDMEIR…HGQYHVVLVE (82 aa)). An RRM domain is found at 325–411 (NQIYMTFPVH…SELRMTWLKS (87 aa)).

The sequence is that of Putative zinc finger CCCH domain-containing protein 51 from Oryza sativa subsp. japonica (Rice).